The primary structure comprises 465 residues: ATP synthase subunit beta (465 aa).

153-160 (GGAGVGKT) lines the ATP pocket.

It belongs to the ATPase alpha/beta chains family. In terms of assembly, F-type ATPases have 2 components, CF(1) - the catalytic core - and CF(0) - the membrane proton channel. CF(1) has five subunits: alpha(3), beta(3), gamma(1), delta(1), epsilon(1). CF(0) has three main subunits: a(1), b(2) and c(9-12). The alpha and beta chains form an alternating ring which encloses part of the gamma chain. CF(1) is attached to CF(0) by a central stalk formed by the gamma and epsilon chains, while a peripheral stalk is formed by the delta and b chains.

The protein resides in the cell membrane. It carries out the reaction ATP + H2O + 4 H(+)(in) = ADP + phosphate + 5 H(+)(out). Functionally, produces ATP from ADP in the presence of a proton gradient across the membrane. The catalytic sites are hosted primarily by the beta subunits. The protein is ATP synthase subunit beta of Clostridium perfringens (strain ATCC 13124 / DSM 756 / JCM 1290 / NCIMB 6125 / NCTC 8237 / Type A).